A 209-amino-acid chain; its full sequence is Uracil phosphoribosyltransferase (209 aa).

5-phospho-alpha-D-ribose 1-diphosphate-binding positions include Arg79, Arg104, and 131-139 (DPMLATGGS). Residues Ile194 and 199–201 (GDA) contribute to the uracil site. Asp200 is a 5-phospho-alpha-D-ribose 1-diphosphate binding site.

The protein belongs to the UPRTase family. The cofactor is Mg(2+).

It catalyses the reaction UMP + diphosphate = 5-phospho-alpha-D-ribose 1-diphosphate + uracil. It functions in the pathway pyrimidine metabolism; UMP biosynthesis via salvage pathway; UMP from uracil: step 1/1. Its activity is regulated as follows. Allosterically activated by GTP. Its function is as follows. Catalyzes the conversion of uracil and 5-phospho-alpha-D-ribose 1-diphosphate (PRPP) to UMP and diphosphate. This chain is Uracil phosphoribosyltransferase, found in Pediococcus pentosaceus (strain ATCC 25745 / CCUG 21536 / LMG 10740 / 183-1w).